The following is a 349-amino-acid chain: Peroxisomal acyl-coenzyme A thioester hydrolase 1 (349 aa).

Residues D259, S282, and Q333 each act as charge relay system in the active site. A Microbody targeting signal motif is present at residues 347-349 (AKF).

The protein belongs to the C/M/P thioester hydrolase family.

It is found in the peroxisome. The enzyme catalyses hexadecanoyl-CoA + H2O = hexadecanoate + CoA + H(+). Its function is as follows. Acyl-coenzyme A (acyl-CoA) thioesterases are a group of enzymes that catalyze the hydrolysis of acyl-CoAs to the free fatty acid and coenzyme A (CoASH), providing the potential to regulate intracellular levels of acyl-CoAs, free fatty acids and CoASH. Contributes to growth on fatty acids. This chain is Peroxisomal acyl-coenzyme A thioester hydrolase 1 (TES1), found in Saccharomyces cerevisiae (strain ATCC 204508 / S288c) (Baker's yeast).